Reading from the N-terminus, the 496-residue chain is Nectin 1a (496 aa).

An N-terminal signal peptide occupies residues 1–20; sequence MMFINLLLRLMCVFLIGADG. Topologically, residues 21 to 349 are extracellular; sequence QMVQMESSKA…FQDQQQAGVV (329 aa). The Ig-like V-type domain occupies 34-138; it reads GSQVELPCQF…GNRENMVNLT (105 aa). C41 and C121 form a disulfide bridge. N-linked (GlcNAc...) asparagine glycosylation is found at N62 and N136. 2 Ig-like C2-type domains span residues 143–238 and 243–330; these read PMIQ…VTLN and PEVI…VIVT. Disulfide bonds link C168/C222 and C265/C312. N-linked (GlcNAc...) asparagine glycosylation is present at N282. The helical transmembrane segment at 350–370 threads the bilayer; sequence IGGAVVCGTVLLAAVTLLVVF. Residues 371–496 lie on the Cytoplasmic side of the membrane; the sequence is LYRRRCMFKG…SVISKEEWYV (126 aa).

The protein belongs to the nectin family. Cis- and trans-homodimer. Can form trans-heterodimers. As to expression, expressed in the developing eye and nervous system.

It localises to the cell membrane. Its subcellular location is the cell junction. The protein resides in the adherens junction. In terms of biological role, cell adhesion molecule that promotes cell-cell contacts and plays important roles in the development of the nervous system. Acts by forming homophilic or heterophilic trans-dimers. The polypeptide is Nectin 1a (Danio rerio (Zebrafish)).